The chain runs to 369 residues: ATP-dependent (S)-NAD(P)H-hydrate dehydratase (369 aa).

In terms of domain architecture, YjeF C-terminal spans 14 to 356 (LFQKARKLVP…DEVHESFLTL (343 aa)). (6S)-NADPHX contacts are provided by residues G126 and 179-185 (NVNEFSR). Residues 231–235 (KGPHD) and 250–259 (GGLKRSGGQG) each bind ATP. Position 260 (D260) interacts with (6S)-NADPHX. The segment covering 284–306 (GEQEHSKEAENKEEVQGELESNK) has biased composition (basic and acidic residues). The segment at 284 to 307 (GEQEHSKEAENKEEVQGELESNKR) is disordered.

Belongs to the NnrD/CARKD family. It depends on Mg(2+) as a cofactor.

It is found in the cytoplasm. It carries out the reaction (6S)-NADHX + ATP = ADP + phosphate + NADH + H(+). The catalysed reaction is (6S)-NADPHX + ATP = ADP + phosphate + NADPH + H(+). Catalyzes the dehydration of the S-form of NAD(P)HX at the expense of ATP, which is converted to ADP. Together with NAD(P)HX epimerase, which catalyzes the epimerization of the S- and R-forms, the enzyme allows the repair of both epimers of NAD(P)HX, a damaged form of NAD(P)H that is a result of enzymatic or heat-dependent hydration. The protein is ATP-dependent (S)-NAD(P)H-hydrate dehydratase of Emericella nidulans (strain FGSC A4 / ATCC 38163 / CBS 112.46 / NRRL 194 / M139) (Aspergillus nidulans).